We begin with the raw amino-acid sequence, 459 residues long: tRNA modification GTPase MnmE (459 aa).

Residues Arg22, Glu85, and Arg124 each contribute to the (6S)-5-formyl-5,6,7,8-tetrahydrofolate site. Residues 221 to 380 (GLSTVIVGKP…LEIQIRDLFF (160 aa)) enclose the TrmE-type G domain. Position 231 (Asn231) interacts with K(+). GTP-binding positions include 231–236 (NVGKSS), 250–256 (TEVAGTT), and 275–278 (DTAG). Ser235 contributes to the Mg(2+) binding site. The K(+) site is built by Thr250, Val252, and Thr255. A Mg(2+)-binding site is contributed by Thr256. Lys459 serves as a coordination point for (6S)-5-formyl-5,6,7,8-tetrahydrofolate.

The protein belongs to the TRAFAC class TrmE-Era-EngA-EngB-Septin-like GTPase superfamily. TrmE GTPase family. Homodimer. Heterotetramer of two MnmE and two MnmG subunits. The cofactor is K(+).

It localises to the cytoplasm. Functionally, exhibits a very high intrinsic GTPase hydrolysis rate. Involved in the addition of a carboxymethylaminomethyl (cmnm) group at the wobble position (U34) of certain tRNAs, forming tRNA-cmnm(5)s(2)U34. This chain is tRNA modification GTPase MnmE, found in Staphylococcus aureus (strain Mu3 / ATCC 700698).